The following is a 116-amino-acid chain: Ribonuclease P protein component (116 aa).

Belongs to the RnpA family. In terms of assembly, consists of a catalytic RNA component (M1 or rnpB) and a protein subunit.

It catalyses the reaction Endonucleolytic cleavage of RNA, removing 5'-extranucleotides from tRNA precursor.. Its function is as follows. RNaseP catalyzes the removal of the 5'-leader sequence from pre-tRNA to produce the mature 5'-terminus. It can also cleave other RNA substrates such as 4.5S RNA. The protein component plays an auxiliary but essential role in vivo by binding to the 5'-leader sequence and broadening the substrate specificity of the ribozyme. The sequence is that of Ribonuclease P protein component from Exiguobacterium sibiricum (strain DSM 17290 / CCUG 55495 / CIP 109462 / JCM 13490 / 255-15).